The following is a 73-amino-acid chain: Defensin-like protein 34 (73 aa).

Residues 1 to 25 (MASNKVSFFLVLCLCVLSTAEFGEA) form the signal peptide. Intrachain disulfides connect Cys33/Cys59, Cys45/Cys68, and Cys49/Cys70.

This sequence belongs to the DEFL family.

The protein localises to the secreted. This is Defensin-like protein 34 from Arabidopsis thaliana (Mouse-ear cress).